Consider the following 403-residue polypeptide: Riboflavin biosynthesis protein RibBA (403 aa).

The segment at 1-204 (MKNKVFASIG…IGELVNYRRR (204 aa)) is DHBP synthase. D-ribulose 5-phosphate-binding positions include 30–31 (RE), aspartate 35, 143–147 (RTGHT), and glutamate 167. Residue glutamate 31 coordinates Mg(2+). Residue histidine 146 coordinates Mg(2+). The GTP cyclohydrolase II stretch occupies residues 205–403 (TEKFISEIVN…EKMGHMLKKV (199 aa)). 255 to 259 (RVHSS) contacts GTP. 3 residues coordinate Zn(2+): cysteine 260, cysteine 271, and cysteine 273. Residues glutamine 276, 298–300 (EGR), and threonine 320 contribute to the GTP site. Catalysis depends on aspartate 332, which acts as the Proton acceptor; for GTP cyclohydrolase activity. The Nucleophile; for GTP cyclohydrolase activity role is filled by arginine 334. GTP contacts are provided by threonine 355 and lysine 360.

The protein in the N-terminal section; belongs to the DHBP synthase family. In the C-terminal section; belongs to the GTP cyclohydrolase II family. The cofactor is Mg(2+). Mn(2+) serves as cofactor. Requires Zn(2+) as cofactor.

The enzyme catalyses D-ribulose 5-phosphate = (2S)-2-hydroxy-3-oxobutyl phosphate + formate + H(+). The catalysed reaction is GTP + 4 H2O = 2,5-diamino-6-hydroxy-4-(5-phosphoribosylamino)-pyrimidine + formate + 2 phosphate + 3 H(+). It participates in cofactor biosynthesis; riboflavin biosynthesis; 2-hydroxy-3-oxobutyl phosphate from D-ribulose 5-phosphate: step 1/1. The protein operates within cofactor biosynthesis; riboflavin biosynthesis; 5-amino-6-(D-ribitylamino)uracil from GTP: step 1/4. Its function is as follows. Catalyzes the conversion of D-ribulose 5-phosphate to formate and 3,4-dihydroxy-2-butanone 4-phosphate. Catalyzes the conversion of GTP to 2,5-diamino-6-ribosylamino-4(3H)-pyrimidinone 5'-phosphate (DARP), formate and pyrophosphate. The sequence is that of Riboflavin biosynthesis protein RibBA from Endomicrobium trichonymphae.